Here is a 477-residue protein sequence, read N- to C-terminus: MLLLELKKINQTLETIHFIGIGGVGMSGIAEILHNLGYKVQGSDLVENYNTKRLESYGIKIFLGHVPQNITNVSYVVISSAINPDNPEIQEALERKIPIIRRAEMLAELMRLKCSVAVSGSHGKTTTTSLVACLFEAAGLCPTVINGGIINNRSTNAYLGSSNYLIAEADESDATFIHIPSTIAIITNIDPEHLDYYKDFATLISAFRSFIINLPFYGFAVCCIDHKIVRKLVDDITERKIVTYGIDSADAHIIAFNINTDIASSTFDVKISLPNVLGTTIIEKITIPIPGRHNILNSLAAIAVGIELDFGIKAIKNGFNNFKGVKRRFTKVAEYNMASIIDDYAHHPEEIKATLATAKNIANKQNGKVIAIFQPHRYSRMQHLFDDFMLCFADADILYITDIYAAGENPIEGITGQSLVDKITKNKYHDQANFLATLDDAVGVIIDNAVSGDVIIMMGAGNISSFANELPKKFGNL.

120-126 (GSHGKTT) contributes to the ATP binding site.

Belongs to the MurCDEF family.

Its subcellular location is the cytoplasm. It carries out the reaction UDP-N-acetyl-alpha-D-muramate + L-alanine + ATP = UDP-N-acetyl-alpha-D-muramoyl-L-alanine + ADP + phosphate + H(+). Its pathway is cell wall biogenesis; peptidoglycan biosynthesis. Its function is as follows. Cell wall formation. The polypeptide is UDP-N-acetylmuramate--L-alanine ligase (Rickettsia canadensis (strain McKiel)).